The primary structure comprises 450 residues: Phosphoglucosamine mutase (450 aa).

The active-site Phosphoserine intermediate is the serine 101. Mg(2+)-binding residues include serine 101, aspartate 240, aspartate 242, and aspartate 244. Serine 101 is modified (phosphoserine).

Belongs to the phosphohexose mutase family. Mg(2+) is required as a cofactor. In terms of processing, activated by phosphorylation.

It carries out the reaction alpha-D-glucosamine 1-phosphate = D-glucosamine 6-phosphate. Its function is as follows. Catalyzes the conversion of glucosamine-6-phosphate to glucosamine-1-phosphate. The sequence is that of Phosphoglucosamine mutase from Streptococcus agalactiae serotype Ia (strain ATCC 27591 / A909 / CDC SS700).